The primary structure comprises 87 residues: Putative autophagy-related protein 8E (87 aa).

Over residues 1–14 the composition is skewed to basic and acidic residues; that stretch reads MEERRKEKGKEGRR. The tract at residues 1-30 is disordered; the sequence is MEERRKEKGKEGRRGKATGHSVDKFSRSNL. The Phosphatidylethanolamine amidated glycine moiety is linked to residue Gly-87.

This sequence belongs to the ATG8 family. In terms of assembly, interacts with ATG4. In terms of processing, the C-terminal Gly is amidated with phosphatidylethanolamine by an activating system similar to that for ubiquitin.

It localises to the cytoplasmic vesicle. Its subcellular location is the autophagosome membrane. It is found in the vacuole membrane. The protein resides in the cytoplasm. The protein localises to the cytoskeleton. In terms of biological role, ubiquitin-like modifier involved in autophagosomes formation. May mediate the delivery of the autophagosomes to the vacuole via the microtubule cytoskeleton. In Oryza sativa subsp. japonica (Rice), this protein is Putative autophagy-related protein 8E (ATG8E).